Here is a 408-residue protein sequence, read N- to C-terminus: LIN1-like protein (408 aa).

The segment at 1–161 (MKRTLRNPGN…SVPSSPKRMS (161 aa)) is disordered. Positions 41-52 (YYESESEEDEDQ) are enriched in acidic residues. Basic and acidic residues-rich tracts occupy residues 53 to 62 (ILNKEKKEGQ), 73 to 109 (DEKR…KEVL), and 119 to 129 (NGKYSKLRYED). The GYF domain occupies 344 to 402 (SSQYNFKWEFDDKTYGPYTASQIQAWSNEGYFTDAKHAAFIQLANMDEWMYPNNICFCD).

Belongs to the LIN1 family.

The protein is LIN1-like protein of Schizosaccharomyces pombe (strain 972 / ATCC 24843) (Fission yeast).